An 80-amino-acid polypeptide reads, in one-letter code: Exodeoxyribonuclease 7 small subunit (80 aa).

The protein belongs to the XseB family. Heterooligomer composed of large and small subunits.

It localises to the cytoplasm. The catalysed reaction is Exonucleolytic cleavage in either 5'- to 3'- or 3'- to 5'-direction to yield nucleoside 5'-phosphates.. Bidirectionally degrades single-stranded DNA into large acid-insoluble oligonucleotides, which are then degraded further into small acid-soluble oligonucleotides. This Rickettsia typhi (strain ATCC VR-144 / Wilmington) protein is Exodeoxyribonuclease 7 small subunit.